Reading from the N-terminus, the 432-residue chain is uncharacterized protein (432 aa).

Over residues 1–14 (MSDTTDVPENQKSP) the composition is skewed to polar residues. The disordered stretch occupies residues 1-42 (MSDTTDVPENQKSPKPSGKADKRKIEEKPENSSLKRKKFEDP). Residues 18 to 30 (GKADKRKIEEKPE) show a composition bias toward basic and acidic residues. The region spanning 85-148 (RKMVEVFSGE…HEHPIRDLPI (64 aa)) is the S4 RNA-binding domain. The active site involves aspartate 199.

Belongs to the pseudouridine synthase RluA family.

This is an uncharacterized protein from Caenorhabditis elegans.